The primary structure comprises 376 residues: Chaperone protein DnaJ (376 aa).

Positions 5-70 constitute a J domain; the sequence is DYYEVLGVGR…DKKAAYDQFG (66 aa). Residues 132–210 form a CR-type zinc finger; the sequence is GLTKELRIPT…CHGEGRVEKS (79 aa). 8 residues coordinate Zn(2+): Cys-145, Cys-148, Cys-162, Cys-165, Cys-184, Cys-187, Cys-198, and Cys-201. 4 CXXCXGXG motif repeats span residues 145–152, 162–169, 184–191, and 198–205; these read CDLCDGSG, CGTCHGQG, CPTCHGRG, and CGKCHGEG.

This sequence belongs to the DnaJ family. As to quaternary structure, homodimer. Zn(2+) serves as cofactor.

Its subcellular location is the cytoplasm. Functionally, participates actively in the response to hyperosmotic and heat shock by preventing the aggregation of stress-denatured proteins and by disaggregating proteins, also in an autonomous, DnaK-independent fashion. Unfolded proteins bind initially to DnaJ; upon interaction with the DnaJ-bound protein, DnaK hydrolyzes its bound ATP, resulting in the formation of a stable complex. GrpE releases ADP from DnaK; ATP binding to DnaK triggers the release of the substrate protein, thus completing the reaction cycle. Several rounds of ATP-dependent interactions between DnaJ, DnaK and GrpE are required for fully efficient folding. Also involved, together with DnaK and GrpE, in the DNA replication of plasmids through activation of initiation proteins. In Shewanella frigidimarina (strain NCIMB 400), this protein is Chaperone protein DnaJ.